The chain runs to 128 residues: Calcitonin gene-related peptide 1 (128 aa).

The signal sequence occupies residues 1–25; sequence MGFQKFSPFLALSILVLLQAGSLHA. Positions 26 to 80 are excised as a propeptide; it reads APFRSALESSPADPATLSEDEARLLLAALVQDYVQMKASELEQEQEREGSRIIAQ. Cys-84 and Cys-89 are disulfide-bonded. Phe-119 carries the post-translational modification Phenylalanine amide. Residues 125 to 128 constitute a propeptide that is removed on maturation; it reads DLQA.

Belongs to the calcitonin family. Expressed in spinal cord.

It localises to the secreted. Functionally, CGRP1/CALCA is a peptide hormone that induces vasodilation mediated by the CALCRL-RAMP1 receptor complex. Dilates a variety of vessels including the coronary, cerebral and systemic vasculature. Its abundance in the CNS also points toward a neurotransmitter or neuromodulator role. It also elevates platelet cAMP. CGRP1 can also bind and activate CALCR-RAMP1 (AMYR1) receptor complex. This is Calcitonin gene-related peptide 1 from Homo sapiens (Human).